Consider the following 341-residue polypeptide: NADH-ubiquinone oxidoreductase chain 2 (341 aa).

Helical transmembrane passes span 8–28 (ILFITIMIIGTLITVTSNSWL), 60–80 (YFLTQVLASTVLLFSSILLML), 95–115 (MIIMSALLLKSGAAPFHFWFP), 121–141 (LTWMNALMLMTWQKIAPLMLI), 146–166 (IKYLLLISVILSVIIGAIGGL), 195–215 (SIWLIYFFFYSFLSFVLTFMF), 238–258 (FTLFMNFLSLGGLPPFLGFLP), 273–293 (FMLTLMMMSTLITLFFYLRIC), and 321–341 (MIMTFFSIFGLFLISLFYFMF).

Belongs to the complex I subunit 2 family.

Its subcellular location is the mitochondrion inner membrane. It catalyses the reaction a ubiquinone + NADH + 5 H(+)(in) = a ubiquinol + NAD(+) + 4 H(+)(out). Functionally, core subunit of the mitochondrial membrane respiratory chain NADH dehydrogenase (Complex I) that is believed to belong to the minimal assembly required for catalysis. Complex I functions in the transfer of electrons from NADH to the respiratory chain. The immediate electron acceptor for the enzyme is believed to be ubiquinone. The polypeptide is NADH-ubiquinone oxidoreductase chain 2 (mt:ND2) (Drosophila melanogaster (Fruit fly)).